Here is a 247-residue protein sequence, read N- to C-terminus: MKNENLQQKHQTVSSPIVVALDYASQQAALSFVDRIDPQDCRLKVGKEMFTLFGPQFVQTLQQRGFDVFLDLKFHDIPNTVAHAVAAAADLGVWMVNVHASGGSRMMVAAKEALVPFGNDAPLLIAVTVLTSMDEDDLRGLGITVSPAEQAERLAVLTHNSGLDGVVCSAHEAQRLKQVCGQAFKLVTPGIRPAGSDVGDQRRIMTPVQAQQAGVDYMVIGRPITQSADPAQTLREIRVSLLNGASS.

Substrate-binding positions include aspartate 22, lysine 44, 71–80 (DLKFHDIPNT), threonine 131, arginine 192, glutamine 201, glycine 221, and arginine 222. Catalysis depends on lysine 73, which acts as the Proton donor.

The protein belongs to the OMP decarboxylase family. Type 1 subfamily. In terms of assembly, homodimer.

The catalysed reaction is orotidine 5'-phosphate + H(+) = UMP + CO2. It participates in pyrimidine metabolism; UMP biosynthesis via de novo pathway; UMP from orotate: step 2/2. Its function is as follows. Catalyzes the decarboxylation of orotidine 5'-monophosphate (OMP) to uridine 5'-monophosphate (UMP). The chain is Orotidine 5'-phosphate decarboxylase from Pectobacterium carotovorum subsp. carotovorum (strain PC1).